A 503-amino-acid chain; its full sequence is MAKDDKRLTGLFGHPVSDRENSMTAGPRGPLLMQDAYFLEQMSHFDREVIPERRMHAKGSGAFGTFTVTNDITKYTNAKIFSEVGKQTEMFARFSTVAGERGAADLERDIRGFALKFYTEDGNWDLVGNNTPVFFFRDSKLFVSLNRAVKRDPRTNMRSPQNNWDFWTGVPEALHQVTILMSDRGMPKDFRHMHGFGSHTYSMYNDEGERVWVKYHFRTQQGIENYTDDEAAEIVGQDRESSQRDLYDAIENGDYPKWKMYIQVMTEEQAKNHPDNPFDLTKVWYKGDYPLIEVGEFELNRNPENYFMDVEQAAFAPTNIIPGLDFSPDKMLQGRLFSYGDAQRYRLGVNHWQIPVNQPKGVGIENMCPFSRDGQMRFLDGNQGGGPHYYPNNKGVYQSQPEYKKPAFPVDGDGYEYNQRQDDDNYFEQPGKLFRLQSDDAKERIFTNTANAMDGVSEDVKHRHIRHCYKADPEYGKGVAKALEIDINDVDLEGTNDETYENF.

Residues 1–26 (MAKDDKRLTGLFGHPVSDRENSMTAG) are disordered. Catalysis depends on residues His-56 and Asn-129. Tyr-339 contacts heme.

Belongs to the catalase family. In terms of assembly, homodimer. It depends on heme as a cofactor.

The catalysed reaction is 2 H2O2 = O2 + 2 H2O. Functionally, decomposes hydrogen peroxide into water and oxygen; serves to protect cells from the toxic effects of hydrogen peroxide. The polypeptide is Catalase (katA) (Staphylococcus haemolyticus (strain JCSC1435)).